A 349-amino-acid chain; its full sequence is Isopentenyl-diphosphate delta-isomerase (349 aa).

6 to 7 (RK) is a substrate binding site. FMN is bound by residues 62–64 (AMT), Ser-93, and Asn-122. A substrate-binding site is contributed by Gln-152. Glu-153 contributes to the Mg(2+) binding site. Residues Lys-184, Thr-214, 258-259 (GG), and 280-281 (AG) contribute to the FMN site.

This sequence belongs to the IPP isomerase type 2 family. In terms of assembly, homooctamer. Dimer of tetramers. Requires FMN as cofactor. It depends on NADPH as a cofactor. Mg(2+) serves as cofactor.

It localises to the cytoplasm. The catalysed reaction is isopentenyl diphosphate = dimethylallyl diphosphate. Functionally, involved in the biosynthesis of isoprenoids. Catalyzes the 1,3-allylic rearrangement of the homoallylic substrate isopentenyl (IPP) to its allylic isomer, dimethylallyl diphosphate (DMAPP). The sequence is that of Isopentenyl-diphosphate delta-isomerase from Bacillus cereus (strain ATCC 10987 / NRS 248).